Here is a 706-residue protein sequence, read N- to C-terminus: Protein argonaute (706 aa).

The N-terminal domain stretch occupies residues 1–108 (MGKEALLNLY…ELFRDFLTKT (108 aa)). The segment at 109 to 165 (KVKDKFISDFYKKFRDKITVQGKNRKIALIPEVNEKVLKSEEGYFLLHLDLKFRIQP) is linker L1. The PAZ domain maps to 168 to 259 (TLQTLLERND…YPATILKPVL (92 aa)). The tract at residues 263–334 (NLEDEERNEV…AKGKNTKVIT (72 aa)) is linker L2. The tract at residues 335-448 (NLRKFLELCR…YDFVKRELLK (114 aa)) is mid domain. The Piwi domain maps to 419–694 (LVIVFLEEYP…ITKLMLRGIE (276 aa)). The segment at 449-706 (KMIPSQVILN…KKEGDIMYWL (258 aa)) is PIWI domain. Catalysis depends on residues aspartate 502, glutamate 541, and aspartate 571. Aspartate 502 lines the Mn(2+) pocket. Mn(2+) is bound at residue aspartate 571. The segment at 612–650 (FIKGYFYKLSEDSVILATYNQVYEGTHQPIKVRKVYGEL) is PIWI box. Residue aspartate 683 is part of the active site. Mn(2+) is bound at residue aspartate 683.

The protein belongs to the argonaute family. Long pAgo subfamily. Requires Mg(2+) as cofactor.

Its function is as follows. A DNA-guided RNA endonuclease. Uses short ssDNA sequences as guides (gDNA) to bind complementary target strands, resulting in cleavage of the target RNA. The cleavage site is 10 nucleotides downstream of the residue base paired with the 5'-end of the gDNA. Binds ssDNA better than ssRNA, binds dsDNA and DNA-RNA hybrids but does not bind dsRNA. A 2 nucleotide 3'-overhang (possibly on the guide strand) may help load nucleic acids into the complex. The protein is Protein argonaute of Aquifex aeolicus (strain VF5).